The following is a 516-amino-acid chain: tRNA-2-methylthio-N(6)-dimethylallyladenosine synthase (516 aa).

One can recognise an MTTase N-terminal domain in the interval 17 to 133; the sequence is RSFEVRTFGC…LPSLLSRSEH (117 aa). Positions 26, 62, 96, 170, 174, and 177 each coordinate [4Fe-4S] cluster. One can recognise a Radical SAM core domain in the interval 156–392; the sequence is RESAYAGWVS…LALQERISTE (237 aa). The TRAM domain maps to 395-466; that stretch reads AKLIGTEVEL…PFFLIADSGV (72 aa). Disordered stretches follow at residues 409–438 and 492–516; these read SGGR…QGHV and GLGL…GCGC. Over residues 412–438 the composition is skewed to basic and acidic residues; it reads RKNDKTQRMTGRSRDGRLVHFDPQGHV.

It belongs to the methylthiotransferase family. MiaB subfamily. In terms of assembly, monomer. It depends on [4Fe-4S] cluster as a cofactor.

It localises to the cytoplasm. It catalyses the reaction N(6)-dimethylallyladenosine(37) in tRNA + (sulfur carrier)-SH + AH2 + 2 S-adenosyl-L-methionine = 2-methylsulfanyl-N(6)-dimethylallyladenosine(37) in tRNA + (sulfur carrier)-H + 5'-deoxyadenosine + L-methionine + A + S-adenosyl-L-homocysteine + 2 H(+). In terms of biological role, catalyzes the methylthiolation of N6-(dimethylallyl)adenosine (i(6)A), leading to the formation of 2-methylthio-N6-(dimethylallyl)adenosine (ms(2)i(6)A) at position 37 in tRNAs that read codons beginning with uridine. The chain is tRNA-2-methylthio-N(6)-dimethylallyladenosine synthase from Corynebacterium diphtheriae (strain ATCC 700971 / NCTC 13129 / Biotype gravis).